Reading from the N-terminus, the 135-residue chain is MSSTQAQASKTLYGERVIAEGELICFDNPRPERPYEISIELPEFTCQCPFSGYPDFAVLRLLYQPGSRVIELKAIKLYVNSYRNCTISHEEAANKILDDLVVACNPVWMQLEADFNPRGNVHTVVRVSHGSRQPC.

Residue Cys-48 is the Thioimide intermediate of the active site. Asp-55 acts as the Proton donor in catalysis. Residues 70–72 and 89–90 contribute to the substrate site; these read IEL and HE.

The protein belongs to the GTP cyclohydrolase I family. QueF type 1 subfamily.

It is found in the cytoplasm. The enzyme catalyses 7-aminomethyl-7-carbaguanine + 2 NADP(+) = 7-cyano-7-deazaguanine + 2 NADPH + 3 H(+). Its pathway is tRNA modification; tRNA-queuosine biosynthesis. Catalyzes the NADPH-dependent reduction of 7-cyano-7-deazaguanine (preQ0) to 7-aminomethyl-7-deazaguanine (preQ1). This chain is NADPH-dependent 7-cyano-7-deazaguanine reductase, found in Prochlorococcus marinus (strain MIT 9313).